The sequence spans 521 residues: Importin subunit alpha-3 (521 aa).

Alanine 2 is modified (N-acetylalanine). In terms of domain architecture, IBB spans alanine 2–glutamate 58. A Nuclear localization signal motif is present at residues glutamate 43–proline 52. At serine 60 the chain carries Phosphoserine. The stretch at tyrosine 66 to proline 106 is one ARM 1; truncated repeat. 8 ARM repeats span residues isoleucine 107–glutamine 149, threonine 150–tyrosine 194, valine 195–proline 233, proline 234–glutamine 278, methionine 279–glutamine 318, threonine 319–glutamine 360, valine 361–arginine 400, and lysine 401–glutamate 443. Residues tryptophan 137–arginine 229 form an NLS binding site (major) region. The tract at residues arginine 306 to asparagine 394 is NLS binding site (minor). Residues glutamate 447–phenylalanine 485 form an ARM 10; atypical repeat.

It belongs to the importin alpha family. Forms a complex with importin subunit beta-1 (KPNB1). Interacts with SNAI1. Interacts with TALDO1 isoform 1. Interacts with CYB1. As to expression, detected more or less in all tissues examined (Ehrlich ascites tumor cells, testis, kidney, spleen, liver, heart, lung, thymus, skeletal muscle, cerebellum and brain (without cerebellum)). Multiple-sized transcripts were highly expressed, especially in testis.

It is found in the cytoplasm. Its subcellular location is the nucleus. In terms of biological role, functions in nuclear protein import as an adapter protein for nuclear receptor KPNB1. Binds specifically and directly to substrates containing either a simple or bipartite NLS motif. Docking of the importin/substrate complex to the nuclear pore complex (NPC) is mediated by KPNB1 through binding to nucleoporin FxFG repeats and the complex is subsequently translocated through the pore by an energy requiring, Ran-dependent mechanism. At the nucleoplasmic side of the NPC, Ran binds to importin-beta and the three components separate and importin-alpha and -beta are re-exported from the nucleus to the cytoplasm where GTP hydrolysis releases Ran from importin. The directionality of nuclear import is thought to be conferred by an asymmetric distribution of the GTP- and GDP-bound forms of Ran between the cytoplasm and nucleus. Mediates nuclear import of AARS1, MRTFA and RANBP3. The sequence is that of Importin subunit alpha-3 (Kpna4) from Mus musculus (Mouse).